The following is a 198-amino-acid chain: Pyridoxal 5'-phosphate synthase subunit PdxT (198 aa).

Glycine 52–serine 54 contacts L-glutamine. The active-site Nucleophile is cysteine 84. Residues arginine 115 and isoleucine 143 to arginine 144 each bind L-glutamine. Residues histidine 179 and glutamate 181 each act as charge relay system in the active site.

Belongs to the glutaminase PdxT/SNO family. In the presence of PdxS, forms a dodecamer of heterodimers. Only shows activity in the heterodimer.

It catalyses the reaction aldehydo-D-ribose 5-phosphate + D-glyceraldehyde 3-phosphate + L-glutamine = pyridoxal 5'-phosphate + L-glutamate + phosphate + 3 H2O + H(+). The catalysed reaction is L-glutamine + H2O = L-glutamate + NH4(+). It functions in the pathway cofactor biosynthesis; pyridoxal 5'-phosphate biosynthesis. In terms of biological role, catalyzes the hydrolysis of glutamine to glutamate and ammonia as part of the biosynthesis of pyridoxal 5'-phosphate. The resulting ammonia molecule is channeled to the active site of PdxS. This is Pyridoxal 5'-phosphate synthase subunit PdxT from Methanococcoides burtonii (strain DSM 6242 / NBRC 107633 / OCM 468 / ACE-M).